The following is a 387-amino-acid chain: Succinate--CoA ligase [ADP-forming] subunit beta (387 aa).

Residues 9 to 236 (KELFAKHNVP…RAATDPLELK (228 aa)) enclose the ATP-grasp domain. ATP-binding positions include K45, 52–54 (GRG), S94, and E99. Mg(2+)-binding residues include N191 and D205. Residues N256 and 318–320 (GIT) each bind substrate.

The protein belongs to the succinate/malate CoA ligase beta subunit family. Heterotetramer of two alpha and two beta subunits. Mg(2+) is required as a cofactor.

The catalysed reaction is succinate + ATP + CoA = succinyl-CoA + ADP + phosphate. It catalyses the reaction GTP + succinate + CoA = succinyl-CoA + GDP + phosphate. The protein operates within carbohydrate metabolism; tricarboxylic acid cycle; succinate from succinyl-CoA (ligase route): step 1/1. Succinyl-CoA synthetase functions in the citric acid cycle (TCA), coupling the hydrolysis of succinyl-CoA to the synthesis of either ATP or GTP and thus represents the only step of substrate-level phosphorylation in the TCA. The beta subunit provides nucleotide specificity of the enzyme and binds the substrate succinate, while the binding sites for coenzyme A and phosphate are found in the alpha subunit. The chain is Succinate--CoA ligase [ADP-forming] subunit beta from Mycobacterium bovis (strain ATCC BAA-935 / AF2122/97).